Here is an 88-residue protein sequence, read N- to C-terminus: Small ribosomal subunit protein bS20 (88 aa).

Belongs to the bacterial ribosomal protein bS20 family.

Binds directly to 16S ribosomal RNA. This chain is Small ribosomal subunit protein bS20, found in Rhodopseudomonas palustris (strain BisA53).